Reading from the N-terminus, the 27-residue chain is uncharacterized protein (27 aa).

The protein resides in the plastid. It localises to the chloroplast. This is an uncharacterized protein from Anthoceros angustus (Hornwort).